Reading from the N-terminus, the 183-residue chain is Holliday junction branch migration complex subunit RuvA (183 aa).

Residues 1 to 63 (MIVGLIGVVE…EDAHLLYGFL (63 aa)) form a domain I region. Positions 64-139 (EESEKILFER…FFIQDENRPA (76 aa)) are domain II. Position 139 (alanine 139) is a region of interest, flexible linker. The tract at residues 139-183 (ARNEVFLALESLGFKSAEINPVLKTLKPHLSIEAAIKEALQQLRS) is domain III.

The protein belongs to the RuvA family. Homotetramer. Forms an RuvA(8)-RuvB(12)-Holliday junction (HJ) complex. HJ DNA is sandwiched between 2 RuvA tetramers; dsDNA enters through RuvA and exits via RuvB. An RuvB hexamer assembles on each DNA strand where it exits the tetramer. Each RuvB hexamer is contacted by two RuvA subunits (via domain III) on 2 adjacent RuvB subunits; this complex drives branch migration. In the full resolvosome a probable DNA-RuvA(4)-RuvB(12)-RuvC(2) complex forms which resolves the HJ.

It localises to the cytoplasm. The RuvA-RuvB-RuvC complex processes Holliday junction (HJ) DNA during genetic recombination and DNA repair, while the RuvA-RuvB complex plays an important role in the rescue of blocked DNA replication forks via replication fork reversal (RFR). RuvA specifically binds to HJ cruciform DNA, conferring on it an open structure. The RuvB hexamer acts as an ATP-dependent pump, pulling dsDNA into and through the RuvAB complex. HJ branch migration allows RuvC to scan DNA until it finds its consensus sequence, where it cleaves and resolves the cruciform DNA. In Helicobacter pylori (strain J99 / ATCC 700824) (Campylobacter pylori J99), this protein is Holliday junction branch migration complex subunit RuvA.